We begin with the raw amino-acid sequence, 457 residues long: Bifunctional protein GlmU (457 aa).

The segment at 1 to 229 (MYNCAIILAA…YEEIMGVNSR (229 aa)) is pyrophosphorylase. Residues 8-11 (LAAG), Lys-22, Gln-73, and 78-79 (GT) each bind UDP-N-acetyl-alpha-D-glucosamine. Position 103 (Asp-103) interacts with Mg(2+). 4 residues coordinate UDP-N-acetyl-alpha-D-glucosamine: Gly-140, Glu-155, Asn-170, and Asn-227. Asn-227 serves as a coordination point for Mg(2+). Residues 230–250 (VQLSEAEIVMRKRINHKHMVN) are linker. Residues 251–457 (GVTFIDCEST…WLDKKGLLKK (207 aa)) form an N-acetyltransferase region. Residues Arg-332 and Lys-350 each contribute to the UDP-N-acetyl-alpha-D-glucosamine site. His-362 functions as the Proton acceptor in the catalytic mechanism. 2 residues coordinate UDP-N-acetyl-alpha-D-glucosamine: Tyr-365 and Asn-376. Residues 385–386 (NY), Ala-422, and Arg-439 each bind acetyl-CoA.

In the N-terminal section; belongs to the N-acetylglucosamine-1-phosphate uridyltransferase family. It in the C-terminal section; belongs to the transferase hexapeptide repeat family. Homotrimer. The cofactor is Mg(2+).

It localises to the cytoplasm. It catalyses the reaction alpha-D-glucosamine 1-phosphate + acetyl-CoA = N-acetyl-alpha-D-glucosamine 1-phosphate + CoA + H(+). It carries out the reaction N-acetyl-alpha-D-glucosamine 1-phosphate + UTP + H(+) = UDP-N-acetyl-alpha-D-glucosamine + diphosphate. It functions in the pathway nucleotide-sugar biosynthesis; UDP-N-acetyl-alpha-D-glucosamine biosynthesis; N-acetyl-alpha-D-glucosamine 1-phosphate from alpha-D-glucosamine 6-phosphate (route II): step 2/2. The protein operates within nucleotide-sugar biosynthesis; UDP-N-acetyl-alpha-D-glucosamine biosynthesis; UDP-N-acetyl-alpha-D-glucosamine from N-acetyl-alpha-D-glucosamine 1-phosphate: step 1/1. Its pathway is bacterial outer membrane biogenesis; LPS lipid A biosynthesis. In terms of biological role, catalyzes the last two sequential reactions in the de novo biosynthetic pathway for UDP-N-acetylglucosamine (UDP-GlcNAc). The C-terminal domain catalyzes the transfer of acetyl group from acetyl coenzyme A to glucosamine-1-phosphate (GlcN-1-P) to produce N-acetylglucosamine-1-phosphate (GlcNAc-1-P), which is converted into UDP-GlcNAc by the transfer of uridine 5-monophosphate (from uridine 5-triphosphate), a reaction catalyzed by the N-terminal domain. This chain is Bifunctional protein GlmU, found in Clostridium botulinum (strain ATCC 19397 / Type A).